The chain runs to 201 residues: Lipoprotein signal peptidase (201 aa).

A run of 2 helical transmembrane segments spans residues S73 to I93 and T97 to D117. Active-site residues include D126 and D144. The helical transmembrane segment at Y135 to I155 threads the bilayer.

The protein belongs to the peptidase A8 family.

Its subcellular location is the cell inner membrane. The catalysed reaction is Release of signal peptides from bacterial membrane prolipoproteins. Hydrolyzes -Xaa-Yaa-Zaa-|-(S,diacylglyceryl)Cys-, in which Xaa is hydrophobic (preferably Leu), and Yaa (Ala or Ser) and Zaa (Gly or Ala) have small, neutral side chains.. It participates in protein modification; lipoprotein biosynthesis (signal peptide cleavage). In terms of biological role, this protein specifically catalyzes the removal of signal peptides from prolipoproteins. In Rickettsia conorii (strain ATCC VR-613 / Malish 7), this protein is Lipoprotein signal peptidase.